The primary structure comprises 1744 residues: Complement C4-A (1744 aa).

Residues 1-19 (MRLLWGLIWASSFFTLSLQ) form the signal peptide. A disulfide bridge connects residues cysteine 68 and cysteine 97. Residue asparagine 226 is glycosylated (N-linked (GlcNAc...) asparagine). Cysteine 635 and cysteine 669 form a disulfide bridge. Residues 676-679 (RKKR) constitute a propeptide that is removed on maturation. 3 cysteine pairs are disulfide-bonded: cysteine 702–cysteine 728, cysteine 703–cysteine 735, and cysteine 716–cysteine 736. Residues 702–736 (CCQDGVTRLPMMRSCEQRAARVQQPDCREPFLSCC) enclose the Anaphylatoxin-like domain. A glycan (N-linked (GlcNAc...) asparagine) is linked at asparagine 862. The residue at position 918 (serine 918) is a Phosphoserine; by FAM20C. Positions 1010 to 1013 (CGEQ) form a cross-link, isoglutamyl cysteine thioester (Cys-Gln). Residue threonine 1244 is glycosylated (O-linked (GalNAc...) threonine). Asparagine 1328 carries N-linked (GlcNAc...) (complex) asparagine glycosylation. N-linked (GlcNAc...) asparagine glycosylation occurs at asparagine 1391. Residues tyrosine 1417, tyrosine 1420, and tyrosine 1422 each carry the sulfotyrosine modification. Positions 1447 to 1453 (RRNRRRR) are excised as a propeptide. 5 disulfides stabilise this stretch: cysteine 1471–cysteine 1535, cysteine 1583–cysteine 1588, cysteine 1595–cysteine 1673, cysteine 1618–cysteine 1742, and cysteine 1718–cysteine 1727. The NTR domain maps to 1595–1742 (CPRQRRALER…FLQEYGTQGC (148 aa)).

As to quaternary structure, complement circulates in blood as a disulfide-linked trimer of an alpha, beta and gamma chain. Complement C4b is composed of complement C4b-A, complement C4 beta and complement C4 gamma chains that are associated via disulfide bonds. Non-enzymatic component of the C3 convertase, also named C4bC2b, composed of the serine protease complement C2b (C2), as well as complement C4b. Non-enzymatic component of the C5 convertase, also named C4bC2bC3b, composed of the serine protease complement C2b (C2), complement C3b, as well as complement C4b. In terms of processing, prior to secretion, the single-chain precursor is enzymatically cleaved by plasminogen (PLG) to yield non-identical chains alpha, beta and gamma. During activation of the complement systems, the alpha chain is cleaved into C4a and C4b by different proteases depending on the complement pathway: C4b stays linked to the beta and gamma chains, while C4a is released in the plasma. The alpha chain is cleaved by C1S to generate C4a and C4b following activation by the classical complement system. The alpha chain is cleaved to generate C4a and C4b by MASP2 following activation by the lectin complement system. The alpha chain is cleaved by GZMK to generate C4a and C4b following activation by the GZMK complement system. Further degradation of C4b by C1 into the inactive fragments C4c and C4d blocks the generation of C3 convertase. The proteolytic cleavages often are incomplete so that many structural forms can be found in plasma. Post-translationally, upon activation, the internal thioester bond reacts with carbohydrate antigens on the target surface to form amide or ester bonds, leading to covalent association with the surface of pathogens. Ser-1236 of complement C4b interacts with complement C3b via a thioester linkage. In terms of processing, N- and O-glycosylated. O-glycosylated with a core 1 or possibly core 8 glycan. In terms of tissue distribution, complement component C4 is expressed at highest levels in the liver, at moderate levels in the adrenal cortex, adrenal medulla, thyroid gland, and the kidney, and at lowest levels in the heart, ovary, small intestine, thymus, pancreas and spleen. The extra-hepatic sites of expression may be important for the local protection and inflammatory response.

The protein localises to the secreted. The protein resides in the synapse. Its subcellular location is the cell projection. It is found in the axon. It localises to the dendrite. The protein localises to the cell surface. Specifically inhibited by nanobody hC4Nb8, inhibiting the classical complement pathway. Specifically inhibited by NbB5, NbE11 and NbH9 nanobodies, and to a lesser extent by NbH11 and NbE3 nanobodies. Precursor of non-enzymatic components of the classical, lectin and GZMK complement pathways, which consist in a cascade of proteins that leads to phagocytosis and breakdown of pathogens and signaling that strengthens the adaptive immune system. Its function is as follows. Non-enzymatic component of C3 and C5 convertases. Generated following cleavage by complement proteases (C1S, MASP2 or GZMK, depending on the complement pathway), it covalently attaches to the surface of pathogens, where it acts as an opsonin that marks the surface of antigens for removal. It then recruits the serine protease complement C2b to form the C3 and C5 convertases, which cleave and activate C3 and C5, respectively, the next components of the complement pathways. Complement C4b-A isotype is responsible for effective binding to form amide bonds with immune aggregates or protein antigens, while complement C4b-B isotype catalyzes the transacylation of the thioester carbonyl group to form ester bonds with carbohydrate antigens. Functionally, putative humoral mediator released following cleavage by complement proteases (C1S, MASP2 or GZMK, depending on the complement pathway). While it is strongly similar to anaphylatoxins, its role is unclear. Was reported to act as a mediator of local inflammatory process; however these effects were probably due to contamination with C3a and/C5a anaphylatoxins in biological assays. The polypeptide is Complement C4-A (Homo sapiens (Human)).